Reading from the N-terminus, the 418-residue chain is Nuclear hormone receptor family member nhr-209 (418 aa).

The segment at residues 43-121 is a DNA-binding region (nuclear receptor); it reads PEKCAVCKNA…VGMDSTAIRA (79 aa). 2 consecutive NR C4-type zinc fingers follow at residues 46 to 66 and 82 to 104; these read CAVCKNAAIGYHYNVPSCNGC and CMNHKNCLDEIESDESQRLCKGC. One can recognise an NR LBD domain in the interval 174-414; the sequence is TIPDGFEDMR…SHPPKSLFDE (241 aa). Residues 403-414 are AF-2; sequence ECSHPPKSLFDE.

Belongs to the nuclear hormone receptor family.

The protein resides in the nucleus. Functionally, transcriptional regulator. Plays a role in modulation of lifespan and immunity. The protein is Nuclear hormone receptor family member nhr-209 of Caenorhabditis elegans.